The chain runs to 345 residues: rRNA 2'-O-methyltransferase fibrillarin (345 aa).

Positions 1-114 are disordered; that stretch reads MGKPGFSPRG…GFKGGKTVTI (114 aa). Residues 8 to 108 are compositionally biased toward gly residues; sequence PRGGGGGGGG…RGGGAGGFKG (101 aa). Asymmetric dimethylarginine is present on residues R9, R23, R25, R41, R43, R49, R52, R59, R64, R72, R78, R84, R89, R94, and R99. S-adenosyl-L-methionine is bound by residues 198-199, 217-218, 242-243, and 262-265; these read TT, EF, DA, and DVAQ.

It belongs to the methyltransferase superfamily. Fibrillarin family. In terms of assembly, component of box C/D small nucleolar ribonucleoprotein (snoRNP) particles. It is associated with the U3, U8 and U13 small nuclear RNAs. By homology to other fibrillarins, some or all of the N-terminal domain arginines are modified to asymmetric dimethylarginine (DMA).

The protein localises to the nucleus. The protein resides in the nucleolus. The catalysed reaction is L-glutaminyl-[histone H2A] + S-adenosyl-L-methionine = N(5)-methyl-L-glutaminyl-[histone H2A] + S-adenosyl-L-homocysteine + H(+). Functionally, S-adenosyl-L-methionine-dependent methyltransferase that has the ability to methylate both RNAs and proteins. Involved in pre-rRNA processing. Utilizes the methyl donor S-adenosyl-L-methionine to catalyze the site-specific 2'-hydroxyl methylation of ribose moieties in pre-ribosomal RNA. Site specificity is provided by a guide RNA that base pairs with the substrate. Methylation occurs at a characteristic distance from the sequence involved in base pairing with the guide RNA. Also acts as a protein methyltransferase by mediating methylation of 'Gln-105' of histone H2A (H2AQ105me), a modification that impairs binding of the FACT complex and is specifically present at 35S ribosomal DNA locus. This is rRNA 2'-O-methyltransferase fibrillarin from Drosophila erecta (Fruit fly).